A 568-amino-acid polypeptide reads, in one-letter code: Circadian clock protein KaiC2 (568 aa).

KaiC domains follow at residues I11–Q250 and E251–T485. A phosphoserine; by autocatalysis mark is found at S423 and S424.

The protein belongs to the KaiC family. As to quaternary structure, multimerizes, probably forming homohexamers, no interaction with KaiC1 or KaiC3 is seen.

The enzyme catalyses L-seryl-[protein] + ATP = O-phospho-L-seryl-[protein] + ADP + H(+). The catalysed reaction is L-threonyl-[protein] + ATP = O-phospho-L-threonyl-[protein] + ADP + H(+). It catalyses the reaction ATP + H2O = ADP + phosphate + H(+). In terms of biological role, autophosphorylates independently of KaiA. The sequence is that of Circadian clock protein KaiC2 from Synechocystis sp. (strain ATCC 27184 / PCC 6803 / Kazusa).